Here is an 883-residue protein sequence, read N- to C-terminus: Integrator complex subunit 6-A (883 aa).

One can recognise a VWFA domain in the interval 3–227; that stretch reads ILLFLLDTSA…QCLESLVQKV (225 aa). Positions 626 to 633 match the Inhibitory loop motif; sequence MMIDEADE.

It belongs to the Integrator subunit 6 family. In terms of assembly, component of the Integrator complex, composed of core subunits INTS1, INTS2, INTS3, INTS4, INTS5, INTS6, INTS7, INTS8, INTS9/RC74, INTS10, INTS11/CPSF3L, INTS12, INTS13, INTS14 and INTS15. The core complex associates with protein phosphatase 2A subunits PPP2CA and PPP2R1A, to form the Integrator-PP2A (INTAC) complex.

The protein resides in the nucleus. It localises to the chromosome. Component of the integrator complex, a multiprotein complex that terminates RNA polymerase II (Pol II) transcription in the promoter-proximal region of genes. The integrator complex provides a quality checkpoint during transcription elongation by driving premature transcription termination of transcripts that are unfavorably configured for transcriptional elongation: the complex terminates transcription by (1) catalyzing dephosphorylation of the C-terminal domain (CTD) of Pol II subunit POLR2A/RPB1 and SUPT5H/SPT5, (2) degrading the exiting nascent RNA transcript via endonuclease activity and (3) promoting the release of Pol II from bound DNA. The integrator complex is also involved in terminating the synthesis of non-coding Pol II transcripts, such as enhancer RNAs (eRNAs), small nuclear RNAs (snRNAs), telomerase RNAs and long non-coding RNAs (lncRNAs). Within the integrator complex, INTS6 acts as a molecular adapter that promotes assembly of protein phosphatase 2A (PP2A) subunits to the integrator core complex, promoting recruitment of PP2A to transcription pause-release checkpoint. The polypeptide is Integrator complex subunit 6-A (ints6-a) (Xenopus laevis (African clawed frog)).